The sequence spans 331 residues: uncharacterized protein (331 aa).

43-50 (GANESGKS) contacts ATP.

This is an uncharacterized protein from Methanocaldococcus jannaschii (strain ATCC 43067 / DSM 2661 / JAL-1 / JCM 10045 / NBRC 100440) (Methanococcus jannaschii).